We begin with the raw amino-acid sequence, 236 residues long: 3-oxoacyl-[acyl-carrier-protein] reductase (236 aa).

N-acetylmethionine is present on Met1. NADP(+) is bound by residues 11–14 (SRGI) and 34–35 (RN). Residue Lys40 is modified to N6-acetyllysine. Residues Asp56 and 83–85 (AAG) contribute to the NADP(+) site. Lys96 carries the post-translational modification N6-acetyllysine. Ser134 lines the substrate pocket. NADP(+) contacts are provided by residues Tyr147, Lys151, and 180–182 (IRT). Tyr147 acts as the Proton acceptor in catalysis. At Lys194 the chain carries N6-acetyllysine.

Belongs to the short-chain dehydrogenases/reductases (SDR) family. Homotetramer (in vitro). Heterotetramer with HSD17B8; contains two molecules each of HSD17B8 and CBR4. Does not form homotetramers when HSD17B8 is coexpressed, only heterotetramers (in vitro).

It localises to the mitochondrion matrix. The enzyme catalyses a (3R)-hydroxyacyl-[ACP] + NADP(+) = a 3-oxoacyl-[ACP] + NADPH + H(+). It catalyses the reaction a quinone + NADPH + H(+) = a quinol + NADP(+). It participates in lipid metabolism; fatty acid biosynthesis. In terms of biological role, component of the heterotetramer complex KAR (3-ketoacyl-[acyl carrier protein] reductase or 3-ketoacyl-[ACP] reductase) that forms part of the mitochondrial fatty acid synthase (mtFAS). Beta-subunit of the KAR heterotetramer complex, responsible for the 3-ketoacyl-ACP reductase activity of the mtFAS, reduces 3-oxoacyl-[ACP] to (3R)-hydroxyacyl-[ACP] in a NADPH-dependent manner with no chain length preference, thereby participating in mitochondrial fatty acid biosynthesis. The homotetramer has NADPH-dependent quinone reductase activity (in vitro), hence could play a role in protection against cytotoxicity of exogenous quinones. As a heterotetramer, it can also reduce 9,10-phenanthrenequinone, 1,4-benzoquinone and various other o-quinones and p-quinones (in vitro). In Mus musculus (Mouse), this protein is 3-oxoacyl-[acyl-carrier-protein] reductase (Cbr4).